The sequence spans 435 residues: Tol-Pal system protein TolB (435 aa).

A signal peptide spans 1–26 (MKTFSLLRILIVLVGMAGAFATPAMA).

The protein belongs to the TolB family. The Tol-Pal system is composed of five core proteins: the inner membrane proteins TolA, TolQ and TolR, the periplasmic protein TolB and the outer membrane protein Pal. They form a network linking the inner and outer membranes and the peptidoglycan layer.

It is found in the periplasm. In terms of biological role, part of the Tol-Pal system, which plays a role in outer membrane invagination during cell division and is important for maintaining outer membrane integrity. The chain is Tol-Pal system protein TolB from Allorhizobium ampelinum (strain ATCC BAA-846 / DSM 112012 / S4) (Agrobacterium vitis (strain S4)).